An 881-amino-acid chain; its full sequence is Alanine--tRNA ligase (881 aa).

Zn(2+) contacts are provided by His-563, His-567, Cys-672, and His-676.

It belongs to the class-II aminoacyl-tRNA synthetase family. It depends on Zn(2+) as a cofactor.

The protein localises to the cytoplasm. The enzyme catalyses tRNA(Ala) + L-alanine + ATP = L-alanyl-tRNA(Ala) + AMP + diphosphate. In terms of biological role, catalyzes the attachment of alanine to tRNA(Ala) in a two-step reaction: alanine is first activated by ATP to form Ala-AMP and then transferred to the acceptor end of tRNA(Ala). Also edits incorrectly charged Ser-tRNA(Ala) and Gly-tRNA(Ala) via its editing domain. The polypeptide is Alanine--tRNA ligase (Azorhizobium caulinodans (strain ATCC 43989 / DSM 5975 / JCM 20966 / LMG 6465 / NBRC 14845 / NCIMB 13405 / ORS 571)).